The following is a 110-amino-acid chain: U1-lycotoxin-Ls1kk (110 aa).

The N-terminal stretch at 1–20 (MKFVLLFGVLLVTLFSYSSA) is a signal peptide. Positions 21–44 (EMFDDFDQADEDELLSLIEKEEAR) are excised as a propeptide. Disulfide bonds link Cys47–Cys62, Cys54–Cys71, Cys61–Cys89, and Cys73–Cys87.

Belongs to the neurotoxin 19 (CSTX) family. 03 subfamily. As to expression, expressed by the venom gland.

It localises to the secreted. The sequence is that of U1-lycotoxin-Ls1kk from Lycosa singoriensis (Wolf spider).